Reading from the N-terminus, the 447-residue chain is Transducin beta-like protein 2 (447 aa).

The tract at residues 38-72 (RSGRPACQKANGFPPDKSSGSKKQKQYQRIRKEKP) is disordered. The span at 57 to 69 (GSKKQKQYQRIRK) shows a compositional bias: basic residues. WD repeat units follow at residues 88 to 127 (SHSG…QREH), 134 to 174 (VELD…DGGY), 186 to 226 (KHKA…STIN), 228 to 267 (NQMN…GEFQ), 277 to 316 (GHSA…KKKQ), 329 to 367 (AAGA…KEEC), and 371 to 409 (VHGE…RAMV). Lysine 168 is covalently cross-linked (Glycyl lysine isopeptide (Lys-Gly) (interchain with G-Cter in SUMO2)). Threonine 433 carries the phosphothreonine; by ATM or ATR modification.

The protein is Transducin beta-like protein 2 (TBL2) of Homo sapiens (Human).